A 428-amino-acid polypeptide reads, in one-letter code: Histidine--tRNA ligase (428 aa).

This sequence belongs to the class-II aminoacyl-tRNA synthetase family. Homodimer.

It localises to the cytoplasm. It carries out the reaction tRNA(His) + L-histidine + ATP = L-histidyl-tRNA(His) + AMP + diphosphate + H(+). The polypeptide is Histidine--tRNA ligase (Lactobacillus johnsonii (strain CNCM I-12250 / La1 / NCC 533)).